Here is a 238-residue protein sequence, read N- to C-terminus: Ribitol-5-phosphate cytidylyltransferase 1 (238 aa).

Residues L7 to G10 and G81 to T87 contribute to the CTP site.

The protein belongs to the IspD/TarI cytidylyltransferase family. TarI subfamily.

The catalysed reaction is D-ribitol 5-phosphate + CTP + H(+) = CDP-L-ribitol + diphosphate. It participates in cell wall biogenesis; poly(ribitol phosphate) teichoic acid biosynthesis. Functionally, catalyzes the transfer of the cytidylyl group of CTP to D-ribitol 5-phosphate. The polypeptide is Ribitol-5-phosphate cytidylyltransferase 1 (Staphylococcus aureus (strain USA300)).